Consider the following 182-residue polypeptide: NADH-quinone oxidoreductase subunit B 2 (182 aa).

Residues cysteine 47, cysteine 48, cysteine 113, and cysteine 142 each coordinate [4Fe-4S] cluster.

The protein belongs to the complex I 20 kDa subunit family. As to quaternary structure, NDH-1 is composed of 14 different subunits. Subunits NuoB, C, D, E, F, and G constitute the peripheral sector of the complex. The cofactor is [4Fe-4S] cluster.

It is found in the cell inner membrane. It catalyses the reaction a quinone + NADH + 5 H(+)(in) = a quinol + NAD(+) + 4 H(+)(out). Functionally, NDH-1 shuttles electrons from NADH, via FMN and iron-sulfur (Fe-S) centers, to quinones in the respiratory chain. The immediate electron acceptor for the enzyme in this species is believed to be ubiquinone. Couples the redox reaction to proton translocation (for every two electrons transferred, four hydrogen ions are translocated across the cytoplasmic membrane), and thus conserves the redox energy in a proton gradient. The polypeptide is NADH-quinone oxidoreductase subunit B 2 (Anaeromyxobacter sp. (strain K)).